A 410-amino-acid chain; its full sequence is Maintenance of mitochondrial morphology protein 1 (410 aa).

The Lumenal segment spans residues 1–19; that stretch reads MTPDSCPVRPEPTLSFTQG. A helical transmembrane segment spans residues 20–40; it reads LIVGQISVVFLIAAFIKFFIF. The Cytoplasmic segment spans residues 41–410; sequence GDPPSAEETA…PMPGSLAVDD (370 aa). The span at 71 to 87 shows a compositional bias: polar residues; the sequence is LRTSNQRPGSQQQQSVL. A disordered region spans residues 71–98; it reads LRTSNQRPGSQQQQSVLNRKKSSILRSG. Residues 119–335 form the SMP-LTD domain; that stretch reads QPESLDWFNV…EPRFQEIPLP (217 aa). The tract at residues 380–410 is disordered; that stretch reads ARQAAQRDSLRYRRPRADDAFPMPGSLAVDD. A compositionally biased stretch (basic and acidic residues) spans 387–398; that stretch reads DSLRYRRPRADD.

This sequence belongs to the MMM1 family. In terms of assembly, homodimer. Component of the ER-mitochondria encounter structure (ERMES) or MDM complex, composed of MMM1, MDM10, MDM12 and MDM34. An MMM1 homodimer associates with one molecule of MDM12 on each side in a pairwise head-to-tail manner, and the SMP-LTD domains of MMM1 and MDM12 generate a continuous hydrophobic tunnel for phospholipid trafficking.

Its subcellular location is the endoplasmic reticulum membrane. In terms of biological role, component of the ERMES/MDM complex, which serves as a molecular tether to connect the endoplasmic reticulum (ER) and mitochondria. Components of this complex are involved in the control of mitochondrial shape and protein biogenesis, and function in nonvesicular lipid trafficking between the ER and mitochondria. The MDM12-MMM1 subcomplex functions in the major beta-barrel assembly pathway that is responsible for biogenesis of all outer membrane beta-barrel proteins, and acts in a late step after the SAM complex. The MDM10-MDM12-MMM1 subcomplex further acts in the TOM40-specific pathway after the action of the MDM12-MMM1 complex. Essential for establishing and maintaining the structure of mitochondria and maintenance of mtDNA nucleoids. This is Maintenance of mitochondrial morphology protein 1 from Pyricularia oryzae (strain 70-15 / ATCC MYA-4617 / FGSC 8958) (Rice blast fungus).